Here is a 460-residue protein sequence, read N- to C-terminus: Argininosuccinate lyase (460 aa).

It belongs to the lyase 1 family. Argininosuccinate lyase subfamily.

It is found in the cytoplasm. The catalysed reaction is 2-(N(omega)-L-arginino)succinate = fumarate + L-arginine. It participates in amino-acid biosynthesis; L-arginine biosynthesis; L-arginine from L-ornithine and carbamoyl phosphate: step 3/3. The sequence is that of Argininosuccinate lyase from Lacticaseibacillus paracasei (strain ATCC 334 / BCRC 17002 / CCUG 31169 / CIP 107868 / KCTC 3260 / NRRL B-441) (Lactobacillus paracasei).